Consider the following 456-residue polypeptide: Histidine--tRNA ligase (456 aa).

The segment covering 1–11 (MTQNENPSAQS) has biased composition (polar residues). The tract at residues 1–22 (MTQNENPSAQSGAKPEDKARPA) is disordered.

Belongs to the class-II aminoacyl-tRNA synthetase family. In terms of assembly, homodimer.

The protein localises to the cytoplasm. It catalyses the reaction tRNA(His) + L-histidine + ATP = L-histidyl-tRNA(His) + AMP + diphosphate + H(+). This chain is Histidine--tRNA ligase, found in Cupriavidus pinatubonensis (strain JMP 134 / LMG 1197) (Cupriavidus necator (strain JMP 134)).